A 299-amino-acid polypeptide reads, in one-letter code: ATP phosphoribosyltransferase (299 aa).

This sequence belongs to the ATP phosphoribosyltransferase family. Long subfamily. Mg(2+) serves as cofactor.

Its subcellular location is the cytoplasm. The enzyme catalyses 1-(5-phospho-beta-D-ribosyl)-ATP + diphosphate = 5-phospho-alpha-D-ribose 1-diphosphate + ATP. The protein operates within amino-acid biosynthesis; L-histidine biosynthesis; L-histidine from 5-phospho-alpha-D-ribose 1-diphosphate: step 1/9. With respect to regulation, feedback inhibited by histidine. Its function is as follows. Catalyzes the condensation of ATP and 5-phosphoribose 1-diphosphate to form N'-(5'-phosphoribosyl)-ATP (PR-ATP). Has a crucial role in the pathway because the rate of histidine biosynthesis seems to be controlled primarily by regulation of HisG enzymatic activity. This chain is ATP phosphoribosyltransferase, found in Shewanella frigidimarina (strain NCIMB 400).